Consider the following 1481-residue polypeptide: Cystic fibrosis transmembrane conductance regulator (1481 aa).

The Cytoplasmic portion of the chain corresponds to 1 to 77 (MQRSPLEKAS…KLINALRRCF (77 aa)). The helical transmembrane segment at 78–98 (FWRFMFYGIILYLGEVTKAVQ) threads the bilayer. Residues 81–365 (FMFYGIILYL…WAVQTWYDSL (285 aa)) enclose the ABC transmembrane type-1 1 domain. The Extracellular segment spans residues 99 to 122 (PLLLGRIIASYDPDNKVERSIAIY). A helical membrane pass occupies residues 123–146 (LGIGLCLLFIVRTLLLHPAIFGLH). The Cytoplasmic segment spans residues 147–195 (HIGMQMRIAMFSLIYKKTLKLSSRVLDKISIGQLVSLLSNNLNKFDEGL). A helical membrane pass occupies residues 196–216 (ALAHFVWIAPLQVTLLMGLLW). Topologically, residues 217–222 (ELLQAF) are extracellular. A helical transmembrane segment spans residues 223 to 243 (TFCGLAFLIVLALLQAGLGKM). The Cytoplasmic segment spans residues 244-298 (MMKYRDQRAGKINERLVITSEMIENIQSVKAYCWEEAMEKIIENLRQTELKLTRK). A helical transmembrane segment spans residues 299 to 319 (AAYVRYLNSSAFFFSGFFVVF). The Extracellular portion of the chain corresponds to 320–339 (LSVLPYALLKGIILRKIFTT). The helical transmembrane segment at 340–358 (ISFCIVLRMAVTRQFPWAV) threads the bilayer. Residues 359–858 (QTWYDSLGAI…YLRYITVHKS (500 aa)) lie on the Cytoplasmic side of the membrane. Residues Trp401, 457–464 (GSTGAGKT), and Gln492 each bind ATP. An ABC transporter 1 domain is found at 423–645 (NGDNSLFFSN…RPDFSSKLMG (223 aa)). Cys523 carries the S-palmitoyl cysteine lipid modification. Phosphoserine is present on Ser548. Positions 653–831 (TAERRNSIIT…EEINEEDLRD (179 aa)) are disordered R region. 2 positions are modified to phosphoserine; by PKA: Ser659 and Ser669. A Phosphoserine; by PKC modification is found at Ser685. Lys687 is covalently cross-linked (Glycyl lysine isopeptide (Lys-Gly) (interchain with G-Cter in ubiquitin)). Ser699 carries the post-translational modification Phosphoserine; by PKA. Ser711 is subject to Phosphoserine. At Thr716 the chain carries Phosphothreonine. Residues Ser736 and Ser767 each carry the phosphoserine; by PKA modification. Ser790 is modified (phosphoserine; by PKC). Phosphoserine; by PKA is present on residues Ser795 and Ser813. The helical transmembrane segment at 859–879 (LMFVLIWCLVVFLVEVAASLV) threads the bilayer. The region spanning 859 to 1155 (LMFVLIWCLV…AVNSSIDVDS (297 aa)) is the ABC transmembrane type-1 2 domain. At 880–918 (VLCLFPKIFFQDKGNSTKSANNSYAVIITSTSSYYIFYI) the chain is on the extracellular side. N-linked (GlcNAc...) asparagine glycosylation is found at Asn894 and Asn900. A discontinuously helical transmembrane segment spans residues 919–939 (YVGVADTLLALGLFRGLPLVH). Topologically, residues 940 to 990 (TLITVSKTLHHKMLQSVLQAPMSTLNTLKTGGILNRFSKDIAVLDDLLPLT) are cytoplasmic. The helical transmembrane segment at 991 to 1011 (IFDFVQLLLIVIGAVVVVSVL) threads the bilayer. Residues 1012-1013 (QP) are Extracellular-facing. Residues 1014 to 1034 (YIFLATVPVIAAFILLRAYFL) form a helical membrane-spanning segment. The Cytoplasmic segment spans residues 1035–1095 (HTSQQLKQLE…TANWFLYLST (61 aa)). A helical membrane pass occupies residues 1096-1116 (LRWFQMRIEMIFVIFFIAVTF). At 1117–1130 (ISILTTGEGEGRVG) the chain is on the extracellular side. The chain crosses the membrane as a helical span at residues 1131–1151 (IILTLAMNIMGTLQWAVNSSI). Topologically, residues 1152 to 1481 (DVDSLMRSVS…TEEEVQETKL (330 aa)) are cytoplasmic. Residues 1211 to 1444 (MTVKDLTAKY…KSLFRQAISP (234 aa)) enclose the ABC transporter 2 domain. ATP-binding positions include Tyr1220 and 1245 to 1252 (GRTGSGKS). Positions 1387–1481 (RTLKQAFANC…TEEEVQETKL (95 aa)) are interaction with GORASP2. The S-palmitoyl cysteine moiety is linked to residue Cys1396. The tract at residues 1453 to 1481 (HRNSSRQRSRSNIAALKEETEEEVQETKL) is disordered. Position 1457 is a phosphoserine (Ser1457). Positions 1471 to 1481 (ETEEEVQETKL) are enriched in acidic residues. Positions 1479–1481 (TKL) match the PDZ-binding motif.

It belongs to the ABC transporter superfamily. ABCC family. CFTR transporter (TC 3.A.1.202) subfamily. As to quaternary structure, monomer; does not require oligomerization for channel activity. May form oligomers in the membrane. Interacts with SLC26A3, SLC26A6 and NHERF1. Interacts with SHANK2. Interacts with MYO6. Interacts (via C-terminus) with GOPC (via PDZ domain); this promotes CFTR internalization and thereby decreases channel activity. Interacts with SLC4A7 through NHERF1. Found in a complex with MYO5B and RAB11A. Interacts with ANO1. Interacts with SLC26A8. Interacts with AHCYL1; the interaction increases CFTR activity. Interacts with CSE1L. The core-glycosylated form interacts with GORASP2 (via PDZ GRASP-type 1 domain) in respone to ER stress. Interacts with MARCHF2; the interaction leads to CFTR ubiqtuitination and degradation. Interacts with ADGRG2. Post-translationally, N-glycosylated. Phosphorylated; cAMP treatment promotes phosphorylation and activates the channel. Dephosphorylation decreases the ATPase activity (in vitro). Phosphorylation at PKA sites activates the channel. Phosphorylation at PKC sites enhances the response to phosphorylation by PKA. Phosphorylated by AMPK; this inhibits channel activity. In terms of processing, ubiquitinated, leading to its degradation in the lysosome. Deubiquitination by USP10 in early endosomes enhances its endocytic recycling to the cell membrane. Ubiquitinated by RNF185 during ER stress. Ubiquitinated by MARCHF2.

Its subcellular location is the apical cell membrane. The protein localises to the early endosome membrane. The protein resides in the cell membrane. It is found in the recycling endosome membrane. It localises to the endoplasmic reticulum membrane. Its subcellular location is the nucleus. The catalysed reaction is ATP + H2O + closed Cl(-) channel = ADP + phosphate + open Cl(-) channel.. The enzyme catalyses chloride(in) = chloride(out). It carries out the reaction hydrogencarbonate(in) = hydrogencarbonate(out). It catalyses the reaction ATP + H2O = ADP + phosphate + H(+). Its function is as follows. Epithelial ion channel that plays an important role in the regulation of epithelial ion and water transport and fluid homeostasis. Mediates the transport of chloride ions across the cell membrane. Possesses an intrinsic ATPase activity and utilizes ATP to gate its channel; the passive flow of anions through the channel is gated by cycles of ATP binding and hydrolysis by the ATP-binding domains. The ion channel is also permeable to HCO(3)(-); selectivity depends on the extracellular chloride concentration. Exerts its function also by modulating the activity of other ion channels and transporters. Contributes to the regulation of the pH and the ion content of the epithelial fluid layer. Modulates the activity of the epithelial sodium channel (ENaC) complex, in part by regulating the cell surface expression of the ENaC complex. May regulate bicarbonate secretion and salvage in epithelial cells by regulating the transporter SLC4A7. Can inhibit the chloride channel activity of ANO1. Plays a role in the chloride and bicarbonate homeostasis during sperm epididymal maturation and capacitation. The polypeptide is Cystic fibrosis transmembrane conductance regulator (Bos taurus (Bovine)).